Here is a 363-residue protein sequence, read N- to C-terminus: 3-isopropylmalate dehydrogenase (363 aa).

78–91 (GPKWEHLPPDQQPE) serves as a coordination point for NAD(+). Substrate-binding residues include Arg-99, Arg-109, Arg-138, and Asp-227. 3 residues coordinate Mg(2+): Asp-227, Asp-251, and Asp-255. 285–297 (GSAPDITGKNIAN) contributes to the NAD(+) binding site.

Belongs to the isocitrate and isopropylmalate dehydrogenases family. LeuB type 1 subfamily. Homodimer. Mg(2+) serves as cofactor. Mn(2+) is required as a cofactor.

The protein resides in the cytoplasm. It catalyses the reaction (2R,3S)-3-isopropylmalate + NAD(+) = 4-methyl-2-oxopentanoate + CO2 + NADH. It functions in the pathway amino-acid biosynthesis; L-leucine biosynthesis; L-leucine from 3-methyl-2-oxobutanoate: step 3/4. Catalyzes the oxidation of 3-carboxy-2-hydroxy-4-methylpentanoate (3-isopropylmalate) to 3-carboxy-4-methyl-2-oxopentanoate. The product decarboxylates to 4-methyl-2 oxopentanoate. The protein is 3-isopropylmalate dehydrogenase of Shigella boydii serotype 4 (strain Sb227).